A 466-amino-acid chain; its full sequence is Zinc finger and SCAN domain-containing protein 26 (466 aa).

Lys-21 participates in a covalent cross-link: Glycyl lysine isopeptide (Lys-Gly) (interchain with G-Cter in SUMO2). The SCAN box domain maps to 42–124 (CKQFRQLRYE…GILEDLQLDR (83 aa)). 2 stretches are compositionally biased toward basic and acidic residues: residues 124–135 (RGKAGEQKDSAQ) and 163–173 (KPEERGKETRS). The interval 124–182 (RGKAGEQKDSAQRSRPTVLVGEPAPRREAREQPGCALPQKPEERGKETRSENGNLIAGT) is disordered. A C2H2-type 1; degenerate zinc finger spans residues 220–242 (SQCLETKERLVQNSGLIEHDRAH). C2H2-type zinc fingers lie at residues 270-292 (HPCQ…QKIH), 298-320 (YQCK…LRIH), 326-348 (YLCI…QKIH), 354-376 (RECK…QRVH), 382-404 (HHCN…HRIH), 410-432 (FKCN…VRIH), and 438-460 (YKCS…QRHH).

The protein resides in the nucleus. Its function is as follows. May be involved in transcriptional regulation. The sequence is that of Zinc finger and SCAN domain-containing protein 26 (Zscan26) from Mus musculus (Mouse).